The primary structure comprises 252 residues: Hydroxyacylglutathione hydrolase (252 aa).

Residues His54, His56, Asp58, His59, His111, Asp130, and His170 each contribute to the Zn(2+) site.

It belongs to the metallo-beta-lactamase superfamily. Glyoxalase II family. In terms of assembly, monomer. Zn(2+) serves as cofactor.

It catalyses the reaction an S-(2-hydroxyacyl)glutathione + H2O = a 2-hydroxy carboxylate + glutathione + H(+). The protein operates within secondary metabolite metabolism; methylglyoxal degradation; (R)-lactate from methylglyoxal: step 2/2. Functionally, thiolesterase that catalyzes the hydrolysis of S-D-lactoyl-glutathione to form glutathione and D-lactic acid. The sequence is that of Hydroxyacylglutathione hydrolase from Francisella tularensis subsp. tularensis (strain FSC 198).